The chain runs to 371 residues: Chaperone protein DnaJ (371 aa).

A J domain is found at 6–71; sequence DYYEILGVEK…QKRAQYDRFG (66 aa). Residues 104–123 form a disordered region; it reads GGMGGQQRQRRNRNEPRRGS. The CR-type zinc finger occupies 139–217; sequence GIEKEIEFDT…CKGKGRVAEH (79 aa). Zn(2+) contacts are provided by cysteine 152, cysteine 155, cysteine 169, cysteine 172, cysteine 191, cysteine 194, cysteine 205, and cysteine 208. CXXCXGXG motif repeat units follow at residues 152 to 159, 169 to 176, 191 to 198, and 205 to 212; these read CDECKGTG, CGTCGGSG, CPTCHGQG, and CKPCKGKG.

This sequence belongs to the DnaJ family. In terms of assembly, homodimer. Zn(2+) is required as a cofactor.

The protein resides in the cytoplasm. In terms of biological role, participates actively in the response to hyperosmotic and heat shock by preventing the aggregation of stress-denatured proteins and by disaggregating proteins, also in an autonomous, DnaK-independent fashion. Unfolded proteins bind initially to DnaJ; upon interaction with the DnaJ-bound protein, DnaK hydrolyzes its bound ATP, resulting in the formation of a stable complex. GrpE releases ADP from DnaK; ATP binding to DnaK triggers the release of the substrate protein, thus completing the reaction cycle. Several rounds of ATP-dependent interactions between DnaJ, DnaK and GrpE are required for fully efficient folding. Also involved, together with DnaK and GrpE, in the DNA replication of plasmids through activation of initiation proteins. This Bdellovibrio bacteriovorus (strain ATCC 15356 / DSM 50701 / NCIMB 9529 / HD100) protein is Chaperone protein DnaJ.